A 241-amino-acid polypeptide reads, in one-letter code: Accessory protein p30II (241 aa).

Short sequence motifs (nuclear localization signal) lie at residues 73–78 and 91–98; these read RRCRSR and GPRRSRPR. Composition is skewed to low complexity over residues 79–100 and 107–136; these read CVSPRGGAFSPGGPRRSRPRLS and PSSTASSSSLSFNSSSKDNSPSTNSSTSRS. Residues 79–151 form a disordered region; sequence CVSPRGGAFS…GKHRNSPADT (73 aa). A Mitochondrial targeting signal motif is present at residues 175–184; the sequence is LRVWRLCTRR.

The protein belongs to the HTLV-1 accessory protein p30II family. P30II binds to the KIX domains of CREBBP and EP300.

The protein localises to the host nucleus. The protein resides in the host nucleolus. It localises to the host mitochondrion inner membrane. In terms of biological role, p30II is a multifunctional regulator that sequesters EP300/CREBBP and down-regulates CREB-responsive element (CRE) and Tax-responsive element (TRE) mediated transcription. Specifically binds and represses tax/rex mRNA nuclear export. Since Tax and Rex are positive regulators of viral gene expression, their inhibition by p30II reduces virion production, and allows the virus to escape the host immune surveillance and persist latently in an immune-competent host. P13II increases mitochondrial permeability to monovalent cations, producing a rapid, membrane potential-dependent influx of potassium. This could involve a channel-forming activity. Interferes with cell proliferation and transformation and promotes apoptosis induced by ceramide and Fas ligand, probably using the Ras signaling. In Human T-cell leukemia virus 1 (strain Japan ATK-1 subtype A) (HTLV-1), this protein is Accessory protein p30II.